Reading from the N-terminus, the 233-residue chain is ATP-dependent Clp protease proteolytic subunit 2 (233 aa).

S116 (nucleophile) is an active-site residue. H141 is a catalytic residue. The segment at 214–233 (EGLKSIQPNGEAADDSEDDA) is disordered.

Belongs to the peptidase S14 family. As to quaternary structure, fourteen ClpP subunits assemble into 2 heptameric rings which stack back to back to give a disk-like structure with a central cavity, resembling the structure of eukaryotic proteasomes.

Its subcellular location is the cytoplasm. It catalyses the reaction Hydrolysis of proteins to small peptides in the presence of ATP and magnesium. alpha-casein is the usual test substrate. In the absence of ATP, only oligopeptides shorter than five residues are hydrolyzed (such as succinyl-Leu-Tyr-|-NHMec, and Leu-Tyr-Leu-|-Tyr-Trp, in which cleavage of the -Tyr-|-Leu- and -Tyr-|-Trp bonds also occurs).. In terms of biological role, cleaves peptides in various proteins in a process that requires ATP hydrolysis. Has a chymotrypsin-like activity. Plays a major role in the degradation of misfolded proteins. In Salinibacter ruber (strain DSM 13855 / M31), this protein is ATP-dependent Clp protease proteolytic subunit 2.